A 157-amino-acid chain; its full sequence is MGKKDKKNNTLAQNRKAYHDYFIEETFEAGIALVGTEVKSIRGGKANLKDSYASIRNGEVFVCNMHVSPYEQGNIFNRDPLRERKLLLHKSQINTLLGYTAQQGYTLIPLSLYLKNGRVKVALGVAKGKKNYDKRDAIAAKAAKRDIDRQMKERMRY.

Belongs to the SmpB family.

Its subcellular location is the cytoplasm. In terms of biological role, required for rescue of stalled ribosomes mediated by trans-translation. Binds to transfer-messenger RNA (tmRNA), required for stable association of tmRNA with ribosomes. tmRNA and SmpB together mimic tRNA shape, replacing the anticodon stem-loop with SmpB. tmRNA is encoded by the ssrA gene; the 2 termini fold to resemble tRNA(Ala) and it encodes a 'tag peptide', a short internal open reading frame. During trans-translation Ala-aminoacylated tmRNA acts like a tRNA, entering the A-site of stalled ribosomes, displacing the stalled mRNA. The ribosome then switches to translate the ORF on the tmRNA; the nascent peptide is terminated with the 'tag peptide' encoded by the tmRNA and targeted for degradation. The ribosome is freed to recommence translation, which seems to be the essential function of trans-translation. This chain is SsrA-binding protein, found in Clostridium novyi (strain NT).